Consider the following 276-residue polypeptide: Large ribosomal subunit protein uL2 (276 aa).

The interval 224–258 (VAMNPVDHPHGGGEGRTGEGRVPVSPWGTPTKGYR) is disordered. Positions 230–242 (DHPHGGGEGRTGE) are enriched in basic and acidic residues.

Belongs to the universal ribosomal protein uL2 family. In terms of assembly, part of the 50S ribosomal subunit. Forms a bridge to the 30S subunit in the 70S ribosome.

Functionally, one of the primary rRNA binding proteins. Required for association of the 30S and 50S subunits to form the 70S ribosome, for tRNA binding and peptide bond formation. It has been suggested to have peptidyltransferase activity; this is somewhat controversial. Makes several contacts with the 16S rRNA in the 70S ribosome. The protein is Large ribosomal subunit protein uL2 of Polynucleobacter necessarius subsp. necessarius (strain STIR1).